Consider the following 138-residue polypeptide: Large ribosomal subunit protein uL16 (138 aa).

Residues 1-15 (MLSPRKVKYRKKQRG) are compositionally biased toward basic residues. The segment at 1 to 21 (MLSPRKVKYRKKQRGRLSGEA) is disordered.

It belongs to the universal ribosomal protein uL16 family. As to quaternary structure, part of the 50S ribosomal subunit.

Functionally, binds 23S rRNA and is also seen to make contacts with the A and possibly P site tRNAs. This chain is Large ribosomal subunit protein uL16, found in Borrelia duttonii (strain Ly).